The sequence spans 500 residues: L-arabinose isomerase (500 aa).

Residues E306, E333, H350, and H450 each contribute to the Mn(2+) site.

The protein belongs to the arabinose isomerase family. In terms of assembly, homohexamer. The cofactor is Mn(2+).

The catalysed reaction is beta-L-arabinopyranose = L-ribulose. The protein operates within carbohydrate degradation; L-arabinose degradation via L-ribulose; D-xylulose 5-phosphate from L-arabinose (bacterial route): step 1/3. Its function is as follows. Catalyzes the conversion of L-arabinose to L-ribulose. This Escherichia coli (strain 55989 / EAEC) protein is L-arabinose isomerase.